Consider the following 1101-residue polypeptide: MSNSKVRIYELSKELNLDNKDILEICDQLNIAVKSHSSTITESQAERIKAKAEKLNHQMAGKIHSGSGIDRGQNLAKERKQEILAIHHKPNRPFSSTDAPVGSGQSSPLIEPPRPPMKPQPPSPSRSEVTSPITDEPVSTQEDTNGSSSSHEREPQSPMSPFDQQQPEQNTTDHNQEQQNQLKYNQEQSNQLEQESAISSELSEVNVSKLLRPPVRPSEKPASVPSPSKEKEAKSNEPTKAQPIISPKENKSHSKENKLKLPSDIKPKPNKDKDRDGKKPDKEKDKKSLSPQPKVKRESREQREPRESREQREPRESREQREPRESREQREPKLSTELKRPTPPKPPQKPKQAEVAALAIEPEDVEDTAEDLLEEDPLEALTQKPKLKRPTPPKVGKRQNWDEEEEETEEGKGKAGKAAKAGKNKRRQLLLEDEDDFDSDLEEILEIPTAVSISTARPPKPKSMKPAASGNGASKNVKAPTKAEPGRGKSAERERSERKDRKEQPQRAETLVLDKTMTVRELAERLGIAETEIIRILFFKGIAVNITQTLDFDTIQAIAEELEVQIESPEVKAAATKTTEMLDANDLENLHRRPPVVTIMGHVDHGKTTLLDSIRKTKVAQGEAGGITQHIGAYHVDIEHEGKQEQIVFLDTPGHEAFTAMRARGARVTDIAILVVAADDGVQPQTREAISHARAAEVPIVVAINKIDKPESNPDRIKQELSELSLVPEEWGGETIMVPVSALKGENLDTLLEMLLLVAEVGELSANPDRLARGTVIEANLDRTRGPVATLLVQNGTLRVGDTIVAGPVLGKIRAMIDDRGNKVEEASPSFAVEILGLNEVPAAGDEFEVFENEKEARALADQRSQDLRQTRLQQAMSSRRISLSTLSAQAQEGKLKELNLILKADVQGSVEAILGSLKQLPQNEVQIRVLLAAPGEITETDVDLAAASGAVIVGFNTTLASGARQSADQEGIDIREYNIIYKLLDDIQGAMEGLLDPEEVESPLGVAEVRAVFPVGRGAVAGCYVQSGKIIRNRQLRVRRKGEVIYEGVLDSLKRMKEDAREVNAGYECGIGVSKFNDWQEGDSIEVFEMVMKRRTLSTK.

Disordered regions lie at residues 81–437 and 452–509; these read QEIL…EDDF and SIST…QRAE. The span at 93 to 108 shows a compositional bias: polar residues; it reads PFSSTDAPVGSGQSSP. Pro residues predominate over residues 110–124; the sequence is IEPPRPPMKPQPPSP. Composition is skewed to polar residues over residues 128–149 and 157–184; these read EVTS…GSSS and SPMS…QLKY. Residues 185–196 are compositionally biased toward low complexity; that stretch reads NQEQSNQLEQES. Over residues 197–206 the composition is skewed to polar residues; that stretch reads AISSELSEVN. 3 stretches are compositionally biased toward basic and acidic residues: residues 228–237, 248–288, and 295–340; these read SKEKEAKSNE, KENK…DKKS, and VKRE…ELKR. The span at 361–378 shows a compositional bias: acidic residues; it reads EPEDVEDTAEDLLEEDPL. 2 stretches are compositionally biased toward basic residues: residues 385–397 and 414–428; these read PKLK…KVGK and KAGK…KRRQ. The segment covering 484 to 506 has biased composition (basic and acidic residues); it reads EPGRGKSAERERSERKDRKEQPQ. Residues 592 to 765 form the tr-type G domain; sequence RRPPVVTIMG…LLVAEVGELS (174 aa). Positions 601-608 are G1; that stretch reads GHVDHGKT. 601–608 lines the GTP pocket; that stretch reads GHVDHGKT. The G2 stretch occupies residues 626 to 630; the sequence is GITQH. Residues 651-654 form a G3 region; that stretch reads DTPG. GTP contacts are provided by residues 651-655 and 705-708; these read DTPGH and NKID. Residues 705–708 are G4; that stretch reads NKID. The tract at residues 741–743 is G5; sequence SAL.

The protein belongs to the TRAFAC class translation factor GTPase superfamily. Classic translation factor GTPase family. IF-2 subfamily.

Its subcellular location is the cytoplasm. One of the essential components for the initiation of protein synthesis. Protects formylmethionyl-tRNA from spontaneous hydrolysis and promotes its binding to the 30S ribosomal subunits. Also involved in the hydrolysis of GTP during the formation of the 70S ribosomal complex. The protein is Translation initiation factor IF-2 of Gloeothece citriformis (strain PCC 7424) (Cyanothece sp. (strain PCC 7424)).